The sequence spans 399 residues: Phosphoglycerate kinase (399 aa).

Substrate contacts are provided by residues 21-23 (DFN), R36, 59-62 (HLGR), R120, and R158. ATP-binding positions include K209, G297, E328, and 355-358 (GGDS).

The protein belongs to the phosphoglycerate kinase family. In terms of assembly, monomer.

Its subcellular location is the cytoplasm. The catalysed reaction is (2R)-3-phosphoglycerate + ATP = (2R)-3-phospho-glyceroyl phosphate + ADP. It participates in carbohydrate degradation; glycolysis; pyruvate from D-glyceraldehyde 3-phosphate: step 2/5. In Streptococcus thermophilus (strain ATCC BAA-491 / LMD-9), this protein is Phosphoglycerate kinase.